Consider the following 146-residue polypeptide: Deoxyuridine 5'-triphosphate nucleotidohydrolase (146 aa).

Substrate contacts are provided by residues 66 to 68 (RSG), asparagine 79, 83 to 85 (TVD), and lysine 93.

It belongs to the dUTPase family. Mg(2+) serves as cofactor.

It catalyses the reaction dUTP + H2O = dUMP + diphosphate + H(+). It participates in pyrimidine metabolism; dUMP biosynthesis; dUMP from dCTP (dUTP route): step 2/2. In terms of biological role, this enzyme is involved in nucleotide metabolism: it produces dUMP, the immediate precursor of thymidine nucleotides and it decreases the intracellular concentration of dUTP so that uracil cannot be incorporated into DNA. This chain is Deoxyuridine 5'-triphosphate nucleotidohydrolase, found in Fusobacterium nucleatum subsp. nucleatum (strain ATCC 25586 / DSM 15643 / BCRC 10681 / CIP 101130 / JCM 8532 / KCTC 2640 / LMG 13131 / VPI 4355).